The primary structure comprises 127 residues: uncharacterized protein (127 aa).

A helical transmembrane segment spans residues 85–107; that stretch reads VYLGKIGFVLLHVFYLSCIAYYD.

The protein resides in the mitochondrion membrane. This is an uncharacterized protein from Dictyostelium discoideum (Social amoeba).